The following is a 514-amino-acid chain: Glutamate--cysteine ligase, chloroplastic (514 aa).

A chloroplast-targeting transit peptide spans 1–55 (MALLSQAGGAYTVPSGHVSSRTGTKTVSGCVNVLRMKETYVSSYSRTLSTKSMLK). Cystine bridges form between Cys178–Cys398 and Cys341–Cys356.

Belongs to the carboxylate-amine ligase family. Glutamate--cysteine ligase type 2 subfamily. Homodimer or monomer when oxidized or reduced, respectively. The Cys-178-Cys-398 disulfide bridge is known to modulate the enzyme activity according to the redox status. The oxidized form constitutes the active enzyme.

It localises to the plastid. The protein localises to the chloroplast. The enzyme catalyses L-cysteine + L-glutamate + ATP = gamma-L-glutamyl-L-cysteine + ADP + phosphate + H(+). Its pathway is sulfur metabolism; glutathione biosynthesis; glutathione from L-cysteine and L-glutamate: step 1/2. Functionally, participates in the detoxification process. This is Glutamate--cysteine ligase, chloroplastic (GSH1) from Brassica juncea (Indian mustard).